Reading from the N-terminus, the 634-residue chain is Chaperone protein HtpG (634 aa).

Residues 1–344 (MNETVANNKE…SNDLPLNVSR (344 aa)) are a; substrate-binding. A b region spans residues 345-561 (EILQDNKVTQ…DFEMGTQMAK (217 aa)). The tract at residues 562–634 (LLAAAGQAVP…TAINSLLTKG (73 aa)) is c.

This sequence belongs to the heat shock protein 90 family. In terms of assembly, homodimer.

It is found in the cytoplasm. Molecular chaperone. Has ATPase activity. In Vibrio vulnificus (strain CMCP6), this protein is Chaperone protein HtpG.